The chain runs to 356 residues: Magnesium-protoporphyrin IX monomethyl ester [oxidative] cyclase (356 aa).

Belongs to the AcsF family. It depends on Fe cation as a cofactor.

It carries out the reaction Mg-protoporphyrin IX 13-monomethyl ester + 3 NADPH + 3 O2 + 2 H(+) = 3,8-divinyl protochlorophyllide a + 3 NADP(+) + 5 H2O. The protein operates within porphyrin-containing compound metabolism; chlorophyll biosynthesis (light-independent). In terms of biological role, catalyzes the formation of the isocyclic ring in chlorophyll biosynthesis. Mediates the cyclase reaction, which results in the formation of divinylprotochlorophyllide (Pchlide) characteristic of all chlorophylls from magnesium-protoporphyrin IX 13-monomethyl ester (MgPMME). In Parasynechococcus marenigrum (strain WH8102), this protein is Magnesium-protoporphyrin IX monomethyl ester [oxidative] cyclase.